The chain runs to 282 residues: Digeranylgeranylglyceryl phosphate synthase (282 aa).

Transmembrane regions (helical) follow at residues 15-35, 36-56, 81-100, 104-121, 131-151, 159-179, 201-221, 222-242, and 260-280; these read VIGAALGAIMGFLVSSQWYLE, LKGILLSALVVGLIAAGGYVI, VNKAKALSIALFIIGIALSI, IYALVIALVTAIGLIYYA, GNLLVATTTALSIFYGGLAFF, IIIPTLYAFFLTLIREIVKGI, KSWRIAKILLVLLLIISPLPF, FIGFNLIYLILLILVFIPFTI, and YLKISAISGIIAFLLGSLPFF.

It belongs to the UbiA prenyltransferase family. DGGGP synthase subfamily. Mg(2+) serves as cofactor. The cofactor is Ca(2+).

The protein localises to the cell membrane. The enzyme catalyses sn-3-O-(geranylgeranyl)glycerol 1-phosphate + (2E,6E,10E)-geranylgeranyl diphosphate = 2,3-bis-O-(geranylgeranyl)-sn-glycerol 1-phosphate + diphosphate. It participates in membrane lipid metabolism; glycerophospholipid metabolism. With respect to regulation, inhibited by EDTA in vitro. Functionally, prenyltransferase that catalyzes the transfer of the geranylgeranyl moiety of geranylgeranyl diphosphate (GGPP) to the C2 hydroxyl of (S)-3-O-geranylgeranylglyceryl phosphate (GGGP). This reaction is the second ether-bond-formation step in the biosynthesis of archaeal membrane lipids. Cannot use other prenyl donors, i.e. farnesyl diphosphate (FPP) and phytyl diphosphate. Moreover, 4-hydroxybenzoate, 1,4-dihydroxy 2-naphthoate, homogentisate, and alpha-glycerophosphate do not function as prenyl acceptor substrates. The chain is Digeranylgeranylglyceryl phosphate synthase (ubiA-2) from Saccharolobus solfataricus (strain ATCC 35092 / DSM 1617 / JCM 11322 / P2) (Sulfolobus solfataricus).